The sequence spans 336 residues: Holliday junction branch migration complex subunit RuvB (336 aa).

Residues 4–184 (ADRLIQPQVI…FGIPLRLEFY (181 aa)) are large ATPase domain (RuvB-L). Residues Arg-24, Gly-65, Lys-68, Thr-69, Thr-70, 131–133 (EDY), Arg-174, Tyr-184, and Arg-221 each bind ATP. Thr-69 provides a ligand contact to Mg(2+). Residues 185–255 (NIKDLSTIVI…VAELALDMLD (71 aa)) are small ATPAse domain (RuvB-S). Residues 258–336 (AEGFDYMDRK…HFNLIQPEAK (79 aa)) are head domain (RuvB-H). The DNA site is built by Arg-294, Arg-313, and Arg-318.

The protein belongs to the RuvB family. In terms of assembly, homohexamer. Forms an RuvA(8)-RuvB(12)-Holliday junction (HJ) complex. HJ DNA is sandwiched between 2 RuvA tetramers; dsDNA enters through RuvA and exits via RuvB. An RuvB hexamer assembles on each DNA strand where it exits the tetramer. Each RuvB hexamer is contacted by two RuvA subunits (via domain III) on 2 adjacent RuvB subunits; this complex drives branch migration. In the full resolvosome a probable DNA-RuvA(4)-RuvB(12)-RuvC(2) complex forms which resolves the HJ.

It is found in the cytoplasm. The catalysed reaction is ATP + H2O = ADP + phosphate + H(+). Functionally, the RuvA-RuvB-RuvC complex processes Holliday junction (HJ) DNA during genetic recombination and DNA repair, while the RuvA-RuvB complex plays an important role in the rescue of blocked DNA replication forks via replication fork reversal (RFR). RuvA specifically binds to HJ cruciform DNA, conferring on it an open structure. The RuvB hexamer acts as an ATP-dependent pump, pulling dsDNA into and through the RuvAB complex. RuvB forms 2 homohexamers on either side of HJ DNA bound by 1 or 2 RuvA tetramers; 4 subunits per hexamer contact DNA at a time. Coordinated motions by a converter formed by DNA-disengaged RuvB subunits stimulates ATP hydrolysis and nucleotide exchange. Immobilization of the converter enables RuvB to convert the ATP-contained energy into a lever motion, pulling 2 nucleotides of DNA out of the RuvA tetramer per ATP hydrolyzed, thus driving DNA branch migration. The RuvB motors rotate together with the DNA substrate, which together with the progressing nucleotide cycle form the mechanistic basis for DNA recombination by continuous HJ branch migration. Branch migration allows RuvC to scan DNA until it finds its consensus sequence, where it cleaves and resolves cruciform DNA. The sequence is that of Holliday junction branch migration complex subunit RuvB from Shewanella piezotolerans (strain WP3 / JCM 13877).